A 461-amino-acid chain; its full sequence is Dihydrolipoyl dehydrogenase (461 aa).

Residues 33–41 (EAAEVGGVC), K50, and A112 contribute to the FAD site. C41 and C46 form a disulfide bridge. NAD(+) is bound by residues 173 to 177 (GGGAV), E196, and 263 to 266 (AVGR). FAD contacts are provided by D306 and A314. Residue H437 is the Proton acceptor of the active site.

It belongs to the class-I pyridine nucleotide-disulfide oxidoreductase family. In terms of assembly, homodimer. Requires FAD as cofactor.

Its subcellular location is the membrane. The catalysed reaction is N(6)-[(R)-dihydrolipoyl]-L-lysyl-[protein] + NAD(+) = N(6)-[(R)-lipoyl]-L-lysyl-[protein] + NADH + H(+). In terms of biological role, has chromate reductase activity. This is Dihydrolipoyl dehydrogenase from Thermus scotoductus (strain ATCC 700910 / SA-01).